An 817-amino-acid chain; its full sequence is Putative receptor protein kinase ZmPK1 (817 aa).

The first 28 residues, 1–28 (MPRPLAALLSTACILSFFIALFPRAASS), serve as a signal peptide directing secretion. Positions 29–158 (RDILPLGSSL…GGNTVWQSFD (130 aa)) constitute a Bulb-type lectin domain. At 29–472 (RDILPLGSSL…HKTGGGESKW (444 aa)) the chain is on the extracellular side. 4 N-linked (GlcNAc...) asparagine glycosylation sites follow: N83, N128, N228, and N279. An EGF-like domain is found at 292–328 (MTQPCNIHGLCGPNGICHYSPTPTCSCPPGYATRNPG). Intrachain disulfides connect C296–C308 and C302–C316. N-linked (GlcNAc...) asparagine glycans are attached at residues N329 and N339. A PAN domain is found at 342 to 424 (CDRYDKRSMR…VRTIYLKLPT (83 aa)). Intrachain disulfides connect C376/C398 and C384/C386. A glycan (N-linked (GlcNAc...) asparagine) is linked at N452. A helical transmembrane segment spans residues 473 to 498 (FYFYGFIAAFFVVEVSFISFAWFFVL). Topologically, residues 499–817 (KRELRPSELW…AVQTLLSADD (319 aa)) are cytoplasmic. Residues 534 to 817 (RKFKVELGRG…AVQTLLSADD (284 aa)) form the Protein kinase domain. ATP-binding positions include 540 to 548 (LGRGESGTV) and K562. D658 serves as the catalytic Proton acceptor.

Belongs to the protein kinase superfamily. Ser/Thr protein kinase family. In terms of tissue distribution, expressed predominantly in the shoots and roots of young maize seedlings, and to a lesser extent in the silks.

The protein resides in the membrane. It carries out the reaction L-seryl-[protein] + ATP = O-phospho-L-seryl-[protein] + ADP + H(+). The enzyme catalyses L-threonyl-[protein] + ATP = O-phospho-L-threonyl-[protein] + ADP + H(+). Its function is as follows. Probable receptor. Interaction with a ligand in the extracellular domain triggers the protein kinase activity of the cytoplasmic domain. The chain is Putative receptor protein kinase ZmPK1 (PK1) from Zea mays (Maize).